The following is a 125-amino-acid chain: Small ribosomal subunit protein uS13 (125 aa).

The segment at 92-125 is disordered; that stretch reads RRSLPVRGQRTQTNARTRKGKRKTVAGKKKATKK. Basic residues predominate over residues 107–125; the sequence is RTRKGKRKTVAGKKKATKK.

It belongs to the universal ribosomal protein uS13 family. Part of the 30S ribosomal subunit. Forms a loose heterodimer with protein S19. Forms two bridges to the 50S subunit in the 70S ribosome.

In terms of biological role, located at the top of the head of the 30S subunit, it contacts several helices of the 16S rRNA. In the 70S ribosome it contacts the 23S rRNA (bridge B1a) and protein L5 of the 50S subunit (bridge B1b), connecting the 2 subunits; these bridges are implicated in subunit movement. Contacts the tRNAs in the A and P-sites. This is Small ribosomal subunit protein uS13 from Chlorobium phaeobacteroides (strain DSM 266 / SMG 266 / 2430).